Here is a 214-residue protein sequence, read N- to C-terminus: NADH-quinone oxidoreductase subunit C (214 aa).

It belongs to the complex I 30 kDa subunit family. In terms of assembly, NDH-1 is composed of 14 different subunits. Subunits NuoB, C, D, E, F, and G constitute the peripheral sector of the complex.

The protein resides in the cell inner membrane. The catalysed reaction is a quinone + NADH + 5 H(+)(in) = a quinol + NAD(+) + 4 H(+)(out). Its function is as follows. NDH-1 shuttles electrons from NADH, via FMN and iron-sulfur (Fe-S) centers, to quinones in the respiratory chain. The immediate electron acceptor for the enzyme in this species is believed to be ubiquinone. Couples the redox reaction to proton translocation (for every two electrons transferred, four hydrogen ions are translocated across the cytoplasmic membrane), and thus conserves the redox energy in a proton gradient. This is NADH-quinone oxidoreductase subunit C from Caulobacter sp. (strain K31).